The following is a 171-amino-acid chain: Ly6/PLAUR domain-containing protein 6 (171 aa).

Positions 1 to 25 are cleaved as a signal peptide; the sequence is MEPSPALAWLLLLSLVADCLKAAQS. The 95-residue stretch at 47 to 141 folds into the UPAR/Ly6 domain; sequence FKCFTCEKAA…PRNDTDATFA (95 aa). Cystine bridges form between Cys49/Cys77, Cys52/Cys61, Cys70/Cys96, Cys102/Cys121, Cys107/Cys118, and Cys122/Cys127. Positions 88–90 match the NxI motif motif; sequence NSI. N-linked (GlcNAc...) asparagine glycosylation is found at Asn134 and Asn147. The GPI-anchor amidated asparagine moiety is linked to residue Asn147. The propeptide at 148 to 171 is removed in mature form; the sequence is QTNGHPHCVSVIVSCLWVWLGLTL.

In terms of assembly, interacts with nicotinic acetylcholine receptors (nAChRs) including CHRNA3, CHRNA4, CHRNA5, CHRNA6, CHRNA7, CHRNB2 and CHRNB4. Interacts (via NxI motif) with LRP6. In terms of tissue distribution, expressed at high levels in the cortex and cerebellum of the brain, at moderate levels in the lung, kidney, and liver, and at low levels in the heart and prostate (at protein level). Expressed in neurons (at protein level).

The protein localises to the secreted. It localises to the cytoplasm. Its subcellular location is the cell membrane. The protein resides in the synapse. It is found in the synaptosome. The protein localises to the membrane raft. It localises to the cell projection. Its subcellular location is the dendrite. The protein resides in the perikaryon. Acts as a modulator of nicotinic acetylcholine receptors (nAChRs) function in the brain. Inhibits nicotine-induced Ca(2+) influx through nAChRs. In vitro, specifically inhibits alpha-3:beta-4 and alpha-7 nAChR currents in an allosteric manner. Acts as a positive regulator of Wnt/beta-catenin signaling. The chain is Ly6/PLAUR domain-containing protein 6 (Lypd6) from Rattus norvegicus (Rat).